We begin with the raw amino-acid sequence, 403 residues long: Ribosomal RNA large subunit methyltransferase I (403 aa).

The region spanning 9-88 (YPRLVLSKGR…ESIDIAFFTR (80 aa)) is the PUA domain.

It belongs to the methyltransferase superfamily. RlmI family.

The protein localises to the cytoplasm. It catalyses the reaction cytidine(1962) in 23S rRNA + S-adenosyl-L-methionine = 5-methylcytidine(1962) in 23S rRNA + S-adenosyl-L-homocysteine + H(+). Specifically methylates the cytosine at position 1962 (m5C1962) of 23S rRNA. This is Ribosomal RNA large subunit methyltransferase I from Salmonella schwarzengrund (strain CVM19633).